Consider the following 149-residue polypeptide: SsrA-binding protein (149 aa).

The protein belongs to the SmpB family.

The protein resides in the cytoplasm. Its function is as follows. Required for rescue of stalled ribosomes mediated by trans-translation. Binds to transfer-messenger RNA (tmRNA), required for stable association of tmRNA with ribosomes. tmRNA and SmpB together mimic tRNA shape, replacing the anticodon stem-loop with SmpB. tmRNA is encoded by the ssrA gene; the 2 termini fold to resemble tRNA(Ala) and it encodes a 'tag peptide', a short internal open reading frame. During trans-translation Ala-aminoacylated tmRNA acts like a tRNA, entering the A-site of stalled ribosomes, displacing the stalled mRNA. The ribosome then switches to translate the ORF on the tmRNA; the nascent peptide is terminated with the 'tag peptide' encoded by the tmRNA and targeted for degradation. The ribosome is freed to recommence translation, which seems to be the essential function of trans-translation. This chain is SsrA-binding protein, found in Wolbachia sp. subsp. Brugia malayi (strain TRS).